Reading from the N-terminus, the 168-residue chain is Photosystem I assembly protein Ycf3 (168 aa).

3 TPR repeats span residues 35–68, 72–105, and 120–153; these read AFTYYRDGMSAQSEGNYAEALQNYYEAMRLEIDP, SYILYNIGLIHTSNGEHTKALEYYFRALERNPFL, and GEQAIRQGDSEIAEAWFDQAAEYWKQAIALTPGN.

It belongs to the Ycf3 family.

It localises to the plastid. It is found in the chloroplast thylakoid membrane. Functionally, essential for the assembly of the photosystem I (PSI) complex. May act as a chaperone-like factor to guide the assembly of the PSI subunits. The sequence is that of Photosystem I assembly protein Ycf3 from Helianthus annuus (Common sunflower).